Reading from the N-terminus, the 343-residue chain is Protein RecA (343 aa).

It belongs to the RecA family.

Its subcellular location is the cytoplasm. In terms of biological role, can catalyze the hydrolysis of ATP in the presence of single-stranded DNA, the ATP-dependent uptake of single-stranded DNA by duplex DNA, and the ATP-dependent hybridization of homologous single-stranded DNAs. It interacts with LexA causing its activation and leading to its autocatalytic cleavage. The protein is Protein RecA of Coxiella burnetii (strain RSA 493 / Nine Mile phase I).